The primary structure comprises 364 residues: MAQRWGPHALSGVQAQDAYEDSTQASLFTYTNSNNTRGPFEGPNYHIAPRWVYHLTSAWMTIVVIASIFTNGLVLVATMRFKKLRHPLNWILVNLAVADLAETVIASTISVVNQVYGYFVLGHPLCVVEGYTVSLCGITGLWSLAIISWERWLVVCKPFGNVRFDAKLAIVGIVFSWVWSAVWTAPPIFGWSRYWPYGLKTSCGPDVFSGTSYPGVQSYMMVLMVTCCITPLSIIVLCYLHVWLAIRAVAKQQKESESTQKAEKEVTRMVVVMVLAYCLCWGPYAFFACFATANPGYSFHPLVAALPAYFAKSATIYNPIIYVFMNRQFRNCILQLFGKKVEDSSELSSTSRTEASSVSSVSPA.

Residues 1 to 52 (MAQRWGPHALSGVQAQDAYEDSTQASLFTYTNSNNTRGPFEGPNYHIAPRWV) lie on the Extracellular side of the membrane. Residues 17–43 (DAYEDSTQASLFTYTNSNNTRGPFEGP) are required for 11-cis-retinal regeneration. N34 carries N-linked (GlcNAc...) asparagine glycosylation. A helical membrane pass occupies residues 53–77 (YHLTSAWMTIVVIASIFTNGLVLVA). Residues 78-89 (TMRFKKLRHPLN) lie on the Cytoplasmic side of the membrane. Residues 90–115 (WILVNLAVADLAETVIASTISVVNQV) traverse the membrane as a helical segment. The Extracellular portion of the chain corresponds to 116–129 (YGYFVLGHPLCVVE). Residues C126 and C203 are joined by a disulfide bond. A helical membrane pass occupies residues 130 to 149 (GYTVSLCGITGLWSLAIISW). At 150–168 (ERWLVVCKPFGNVRFDAKL) the chain is on the cytoplasmic side. A helical membrane pass occupies residues 169 to 192 (AIVGIVFSWVWSAVWTAPPIFGWS). At 193–218 (RYWPYGLKTSCGPDVFSGTSYPGVQS) the chain is on the extracellular side. Residues 219–246 (YMMVLMVTCCITPLSIIVLCYLHVWLAI) form a helical membrane-spanning segment. Residues 247-268 (RAVAKQQKESESTQKAEKEVTR) lie on the Cytoplasmic side of the membrane. The helical transmembrane segment at 269–292 (MVVVMVLAYCLCWGPYAFFACFAT) threads the bilayer. Topologically, residues 293–300 (ANPGYSFH) are extracellular. Residues 301 to 325 (PLVAALPAYFAKSATIYNPIIYVFM) form a helical membrane-spanning segment. K312 is subject to N6-(retinylidene)lysine. Residues 326-364 (NRQFRNCILQLFGKKVEDSSELSSTSRTEASSVSSVSPA) lie on the Cytoplasmic side of the membrane.

Belongs to the G-protein coupled receptor 1 family. Opsin subfamily. Monomer. Homodimer. Homotetramer. O-glycosylated. In terms of processing, phosphorylated on some or all of the serine and threonine residues present in the C-terminal region. Expressed in cone photoreceptor cells.

Its subcellular location is the membrane. Functionally, visual pigments are the light-absorbing molecules that mediate vision. They consist of an apoprotein, opsin, covalently linked to cis-retinal. May increase spectral sensitivity in dim light. The sequence is that of Medium-wave-sensitive opsin 1 (OPN1MW) from Cavia porcellus (Guinea pig).